Reading from the N-terminus, the 458-residue chain is Argininosuccinate lyase (458 aa).

The protein belongs to the lyase 1 family. Argininosuccinate lyase subfamily.

It is found in the cytoplasm. The catalysed reaction is 2-(N(omega)-L-arginino)succinate = fumarate + L-arginine. It participates in amino-acid biosynthesis; L-arginine biosynthesis; L-arginine from L-ornithine and carbamoyl phosphate: step 3/3. The sequence is that of Argininosuccinate lyase from Geotalea daltonii (strain DSM 22248 / JCM 15807 / FRC-32) (Geobacter daltonii).